The following is a 1086-amino-acid chain: DNA polymerase delta catalytic subunit (1086 aa).

The tract at residues 1–64 is disordered; the sequence is MTDRSSNEGV…KTSSFEDELA (64 aa). Residues 29-58 show a composition bias toward basic and acidic residues; the sequence is EITDVKRRRLSERNGYGDKKGSSSKEKTSS. Positions 993, 996, 1008, and 1011 each coordinate Zn(2+). The CysA-type zinc finger occupies 993–1011; it reads CLGCKAPIKKGKTALCENC. [4Fe-4S] cluster-binding residues include Cys-1040, Cys-1043, Cys-1053, and Cys-1058. Positions 1040-1058 match the CysB motif motif; that stretch reads CQRCQGSMHQDVICTSRDC.

The protein belongs to the DNA polymerase type-B family. As to quaternary structure, heterotetramer that consist of the pol3, cdc1, cdc27 and cdm1 subunits. The pol3 subunit contains the polymerase active site and most likely the active site for the 3'-5' exonuclease activity. The cofactor is [4Fe-4S] cluster.

It localises to the nucleus. It carries out the reaction DNA(n) + a 2'-deoxyribonucleoside 5'-triphosphate = DNA(n+1) + diphosphate. Functionally, catalytic component of DNA polymerase delta (DNA polymerase III) which participates in chromosomal DNA replication. Required during synthesis of the lagging DNA strands at the replication fork, binds at/or near replication origins and moves along DNA with the replication fork. Participates in leading strand synthesis during replication initiation and termination. Has 3'-5' proofreading exonuclease activity that corrects errors arising during DNA replication. The sequence is that of DNA polymerase delta catalytic subunit (pol3) from Schizosaccharomyces pombe (strain 972 / ATCC 24843) (Fission yeast).